Consider the following 208-residue polypeptide: MARYTGPVEKLERRLGVSLALKGERRLAGKSALEKRPYAPGQHGQRRAKISEYGLQLREKQKAKFMYGVSEKQFRRLFQEAARREGNTGALLVQLLEQRLDNVVYRMGFATTRRFARQLVTHGHILVNGKRVDIPSYRVEPGSKVEVAEKSKNNPQIVRAIDLTAQTGIVAWVDVEKEKKFGIFTRNPEREEVIIPVEERFIVELYSK.

The S4 RNA-binding domain occupies 98–161 (QRLDNVVYRM…KNNPQIVRAI (64 aa)).

Belongs to the universal ribosomal protein uS4 family. Part of the 30S ribosomal subunit. Contacts protein S5. The interaction surface between S4 and S5 is involved in control of translational fidelity.

Functionally, one of the primary rRNA binding proteins, it binds directly to 16S rRNA where it nucleates assembly of the body of the 30S subunit. In terms of biological role, with S5 and S12 plays an important role in translational accuracy. This is Small ribosomal subunit protein uS4 from Campylobacter concisus (strain 13826).